A 177-amino-acid polypeptide reads, in one-letter code: Large ribosomal subunit protein uL5c (177 aa).

The protein belongs to the universal ribosomal protein uL5 family. Part of the 50S ribosomal subunit; contacts the 5S rRNA.

Its subcellular location is the plastid. The protein resides in the chloroplast. Functionally, binds 5S rRNA, forms part of the central protuberance of the 50S subunit. The polypeptide is Large ribosomal subunit protein uL5c (rpl5) (Cyanidioschyzon merolae (strain NIES-3377 / 10D) (Unicellular red alga)).